We begin with the raw amino-acid sequence, 313 residues long: Protein MFI (313 aa).

In terms of assembly, can homodimerize. Interacts with MFF; the interaction inhibits MFF interaction with DNM1L. In terms of tissue distribution, enriched in the pancreatic beta cell and the testis and is expressed at low levels in other tissues tested.

The protein resides in the cytoplasm. The protein localises to the cytosol. It is found in the mitochondrion outer membrane. Acts as an inhibitor of mitochondrial fission. Interacts with MFF and prevents DNM1L recruitment to mitochondria, promoting a more fused mitochondrial network. This chain is Protein MFI, found in Homo sapiens (Human).